The chain runs to 153 residues: Lectin-like protein EP153R (153 aa).

Topologically, residues 1 to 30 are cytoplasmic; that stretch reads MYFKKKYIGLIDKNCEKKILDDSSTIKICY. Residues 31–51 form a helical membrane-spanning segment; it reads ILIGILIGTNMITLIYNFIFW. Residues 52–153 are Extracellular-facing; sequence DNYIKCYRNN…YTDLLFICGK (102 aa). Cys-67 and Cys-78 are joined by a disulfide. N-linked (GlcNAc...) asparagine; by host glycosylation is found at Asn-83, Asn-89, Asn-101, Asn-107, Asn-113, Asn-120, Asn-127, and Asn-143. An intrachain disulfide couples Cys-97 to Cys-151.

It belongs to the asfivirus lectin-like protein family. In terms of assembly, homodimer.

Its subcellular location is the host endoplasmic reticulum membrane. Its function is as follows. Down-regulates MHC-I expression by impairing the appropriate configuration or presentation into the plasma membrane of the latter. Participates in viral hemadsorption, which may help viral spread. Reduces the transactivating activity of host TP53, thus inhibiting apoptosis. Non-essential for virus growth in swine macrophage cell cultures. The polypeptide is Lectin-like protein EP153R (African swine fever virus (strain Badajoz 1971 Vero-adapted) (Ba71V)).